The sequence spans 244 residues: Leucyl/phenylalanyl-tRNA--protein transferase (244 aa).

The disordered stretch occupies residues 1–22; sequence MHSQPYLLSPAPNNTPFPPAEH.

The protein belongs to the L/F-transferase family.

The protein localises to the cytoplasm. It catalyses the reaction N-terminal L-lysyl-[protein] + L-leucyl-tRNA(Leu) = N-terminal L-leucyl-L-lysyl-[protein] + tRNA(Leu) + H(+). The enzyme catalyses N-terminal L-arginyl-[protein] + L-leucyl-tRNA(Leu) = N-terminal L-leucyl-L-arginyl-[protein] + tRNA(Leu) + H(+). The catalysed reaction is L-phenylalanyl-tRNA(Phe) + an N-terminal L-alpha-aminoacyl-[protein] = an N-terminal L-phenylalanyl-L-alpha-aminoacyl-[protein] + tRNA(Phe). Its function is as follows. Functions in the N-end rule pathway of protein degradation where it conjugates Leu, Phe and, less efficiently, Met from aminoacyl-tRNAs to the N-termini of proteins containing an N-terminal arginine or lysine. In Xylella fastidiosa (strain M12), this protein is Leucyl/phenylalanyl-tRNA--protein transferase.